The following is a 376-amino-acid chain: 23S rRNA (uracil(747)-C(5))-methyltransferase RlmC (376 aa).

Cysteine 3, cysteine 11, cysteine 14, and cysteine 88 together coordinate [4Fe-4S] cluster. Glutamine 213, phenylalanine 242, glutamate 263, and asparagine 308 together coordinate S-adenosyl-L-methionine. Catalysis depends on cysteine 335, which acts as the Nucleophile.

Belongs to the class I-like SAM-binding methyltransferase superfamily. RNA M5U methyltransferase family. RlmC subfamily.

It carries out the reaction uridine(747) in 23S rRNA + S-adenosyl-L-methionine = 5-methyluridine(747) in 23S rRNA + S-adenosyl-L-homocysteine + H(+). Its function is as follows. Catalyzes the formation of 5-methyl-uridine at position 747 (m5U747) in 23S rRNA. This is 23S rRNA (uracil(747)-C(5))-methyltransferase RlmC from Vibrio vulnificus (strain YJ016).